The following is a 98-amino-acid chain: Putative zinc finger protein ORF98b (98 aa).

A C2H2-type zinc finger spans residues 54-77; the sequence is GFCPYCHNHYRTFGILANHIMRSH.

The chain is Putative zinc finger protein ORF98b from Acidianus convivator (ATV).